The chain runs to 237 residues: Phosphoribosylaminoimidazole-succinocarboxamide synthase (237 aa).

The protein belongs to the SAICAR synthetase family.

It carries out the reaction 5-amino-1-(5-phospho-D-ribosyl)imidazole-4-carboxylate + L-aspartate + ATP = (2S)-2-[5-amino-1-(5-phospho-beta-D-ribosyl)imidazole-4-carboxamido]succinate + ADP + phosphate + 2 H(+). Its pathway is purine metabolism; IMP biosynthesis via de novo pathway; 5-amino-1-(5-phospho-D-ribosyl)imidazole-4-carboxamide from 5-amino-1-(5-phospho-D-ribosyl)imidazole-4-carboxylate: step 1/2. The polypeptide is Phosphoribosylaminoimidazole-succinocarboxamide synthase (Klebsiella pneumoniae (strain 342)).